Here is a 234-residue protein sequence, read N- to C-terminus: MKDQKVIVALDYDRQADALAFVDKIDPSSCRLKVGKEMFTLFGPEFVKELHKRGFSVFLDLKFHDIPNTCSKAVRAAAEMGVWMVNVHASGGERMMTASREILEPYGKDRPLLIGVTVLTSMEQQDLAGIGLDIAPQEQVKRLAALTKNSGLDGVVCSAQEASMLKADLGKYFKLVTPGIRPVGSDVGDQKRIMTPVDAIISGSDYLVIGRPITQAENPSQVLNDINLSLAPVL.

Substrate contacts are provided by residues Asp-11, Lys-33, 60–69 (DLKFHDIPNT), Thr-120, Arg-181, Gln-190, Gly-210, and Arg-211. The active-site Proton donor is Lys-62.

The protein belongs to the OMP decarboxylase family. Type 1 subfamily. In terms of assembly, homodimer.

It catalyses the reaction orotidine 5'-phosphate + H(+) = UMP + CO2. The protein operates within pyrimidine metabolism; UMP biosynthesis via de novo pathway; UMP from orotate: step 2/2. Catalyzes the decarboxylation of orotidine 5'-monophosphate (OMP) to uridine 5'-monophosphate (UMP). This chain is Orotidine 5'-phosphate decarboxylase, found in Aliivibrio salmonicida (strain LFI1238) (Vibrio salmonicida (strain LFI1238)).